A 219-amino-acid chain; its full sequence is MKFNLIDIEDWNRKPYFEHYLNAVRCTYSMTANIEITGLLREIKLKGLKLYPTLIYIITTVVNRHKEFRTCFDQKGKLGYWDSMNPSYTVFHKDNETFSSIWTEYDENFPRFYYNYLEDIRNYSDVLNFMPKTGEPANTINVSSIPWVNFTGFNLNIYNDATYLIPIFTLGKYFQQDNKILLPMSVQVHHAVCDGYHISRFFNEAQELASNYETWLGEK.

Residue His190 is the Proton acceptor of the active site.

It belongs to the chloramphenicol acetyltransferase family. Homotrimer.

It carries out the reaction chloramphenicol + acetyl-CoA = chloramphenicol 3-acetate + CoA. This enzyme is an effector of chloramphenicol resistance in bacteria. This Clostridium perfringens protein is Chloramphenicol acetyltransferase (catQ).